Reading from the N-terminus, the 131-residue chain is Inactive protein FON2 SPARE1 (131 aa).

Residues 67-131 (SPSSLTTTDR…VPTGPNPLHH (65 aa)) are disordered. Over residues 76–97 (RHHHHHRHHGHHHHRGHDRWNR) the composition is skewed to basic residues.

The protein belongs to the CLV3/ESR signal peptide family. Expressed in all aerial apical meristems, including the floral and inflorescence meristems in the reproductive phase and the shoot apical meristem in the vegetative phase. Also detected in the primordia of lateral organs such as the leaf and the floral organs.

In terms of biological role, non functional suppressor of the fon2 mutation. In Oryza sativa subsp. japonica, the protein has a single amino acid substitution at the putative processing site of the signal peptide while in all the other varieties/species of domesticated and wild rice tested the protein is functional. This Oryza sativa subsp. japonica (Rice) protein is Inactive protein FON2 SPARE1 (FOS1).